Here is a 256-residue protein sequence, read N- to C-terminus: ATG8-interacting protein 1 (256 aa).

The AIM (Atg8-family-interacting motif) motif lies at 14 to 17; that stretch reads WEVV. The helical transmembrane segment at 181–200 threads the bilayer; it reads ANAIWSLFFAAAVTGLVVLG. An AIM (Atg8-family-interacting motif) motif is present at residues 208–211; it reads WQVL.

Interacts with ATG8F. Interacts with ATG8H. Interacts with APE1 and PSBS/NPQ4.

Its subcellular location is the endoplasmic reticulum membrane. It is found in the membrane. The protein resides in the plastid. The protein localises to the chloroplast membrane. In terms of biological role, involved in a special stress-induced plastid-to-vacuole protein trafficking pathway. Interacts with ATG8F in plastid bodies to subsequently enable their delivery to the vacuole by an autophagic pathway. Interacts with the plastid proteins APE1 and PSBS/NPQ4 and may recruit them as cargo into plastid bodies that may be recognized by the autophagy machinery for degradation in the vacuole. Involved in the alleviation of damage caused by salt stress during plant development, probably through its involvement in plastid-to-vacuole and ER-to-vacuole trafficking. Plays a role in seed germination in response to exogenous abscisic acid (ABA) treatment. This chain is ATG8-interacting protein 1, found in Arabidopsis thaliana (Mouse-ear cress).